Consider the following 210-residue polypeptide: MALELLTPFTKVELEEERKDKNRKQIGILGGNFNPVHNAHLLVADQVRQQLGLDEVLLMPEYKPPHVDKKATIDEKHRLKMLELAIKGIEGLAIETIELKRKGVSYTYDTMKDLIEQNPDVDYYFIIGADMVDYLPKWHKIDELIQMVQFVGVQRPKYKAGTSYPVIWVDVPLMDISSSMIRDFIRKNRKPNFLLPKLVLDYIEKEGLYQ.

This sequence belongs to the NadD family.

The catalysed reaction is nicotinate beta-D-ribonucleotide + ATP + H(+) = deamido-NAD(+) + diphosphate. The protein operates within cofactor biosynthesis; NAD(+) biosynthesis; deamido-NAD(+) from nicotinate D-ribonucleotide: step 1/1. Its function is as follows. Catalyzes the reversible adenylation of nicotinate mononucleotide (NaMN) to nicotinic acid adenine dinucleotide (NaAD). The chain is Probable nicotinate-nucleotide adenylyltransferase from Streptococcus mutans serotype c (strain ATCC 700610 / UA159).